Consider the following 137-residue polypeptide: Large ribosomal subunit protein uL16 (137 aa).

The protein belongs to the universal ribosomal protein uL16 family. As to quaternary structure, part of the 50S ribosomal subunit.

Its function is as follows. Binds 23S rRNA and is also seen to make contacts with the A and possibly P site tRNAs. This chain is Large ribosomal subunit protein uL16, found in Streptococcus thermophilus (strain CNRZ 1066).